A 416-amino-acid polypeptide reads, in one-letter code: Elongation factor 1-gamma 3 (416 aa).

A GST N-terminal domain is found at Met-1 to Ser-82. Residues Ser-87–Val-215 enclose the GST C-terminal domain. Residues Pro-213 to Leu-263 are disordered. The span at Pro-221–Ala-245 shows a compositional bias: basic and acidic residues. Residues Pro-256–Lys-416 form the EF-1-gamma C-terminal domain.

As to quaternary structure, EF-1 is composed of four subunits: alpha, beta, delta, and gamma.

Probably plays a role in anchoring the complex to other cellular components. This chain is Elongation factor 1-gamma 3, found in Oryza sativa subsp. japonica (Rice).